Consider the following 324-residue polypeptide: Interleukin-12 subunit beta (324 aa).

A signal peptide spans 1 to 22; the sequence is MHLQQLVVSWFSLVWLASPIVA. Residues 23–106 enclose the Ig-like C2-type domain; the sequence is IWELEKNVYV…LSQSLLLLHK (84 aa). The cysteines at positions 50 and 90 are disulfide-linked. 3 N-linked (GlcNAc...) asparagine glycosylation sites follow: Asn-125, Asn-135, and Asn-218. The Fibronectin type-III domain occupies 233-324; sequence PPKNLQLNPL…WSEWASVSCN (92 aa).

This sequence belongs to the IL-12B family. Heterodimer with IL12A; disulfide-linked. The heterodimer is known as interleukin IL-12. Heterodimer with IL23A; disulfide-linked. The heterodimer is known as interleukin IL-23. Also secreted as a monomer. Interacts with NBR1; this interaction promotes IL-12 secretion.

Its subcellular location is the secreted. Its function is as follows. Cytokine that can act as a growth factor for activated T and NK cells, enhance the lytic activity of NK/lymphokine-activated killer cells, and stimulate the production of IFN-gamma by resting PBMC. Functionally, associates with IL23A to form the IL-23 interleukin, a heterodimeric cytokine which functions in innate and adaptive immunity. IL-23 may constitute with IL-17 an acute response to infection in peripheral tissues. IL-23 binds to a heterodimeric receptor complex composed of IL12RB1 and IL23R, activates the Jak-Stat signaling cascade, stimulates memory rather than naive T-cells and promotes production of pro-inflammatory cytokines. IL-23 induces autoimmune inflammation and thus may be responsible for autoimmune inflammatory diseases and may be important for tumorigenesis. This Sus scrofa (Pig) protein is Interleukin-12 subunit beta (IL12B).